Consider the following 284-residue polypeptide: Tryptophan 2,3-dioxygenase (284 aa).

Substrate-binding positions include 53 to 57, Tyr-115, and Arg-119; that span reads FIVQH. His-242 contacts heme. Thr-256 contacts substrate.

Belongs to the tryptophan 2,3-dioxygenase family. Homotetramer. Heme serves as cofactor.

It catalyses the reaction L-tryptophan + O2 = N-formyl-L-kynurenine. It functions in the pathway amino-acid degradation; L-tryptophan degradation via kynurenine pathway; L-kynurenine from L-tryptophan: step 1/2. Functionally, heme-dependent dioxygenase that catalyzes the oxidative cleavage of the L-tryptophan (L-Trp) pyrrole ring and converts L-tryptophan to N-formyl-L-kynurenine. Catalyzes the oxidative cleavage of the indole moiety. This is Tryptophan 2,3-dioxygenase from Bordetella pertussis (strain Tohama I / ATCC BAA-589 / NCTC 13251).